Reading from the N-terminus, the 972-residue chain is Fibroblast growth factor receptor (972 aa).

The first 43 residues, 1 to 43, serve as a signal peptide directing secretion; the sequence is MSLPRCPRTRTVMFSRTLTRCYPQRTLWIAILCVICSWTLSTA. The Extracellular segment spans residues 44 to 547; sequence GATTIRDKEV…NNMQPTSKTQ (504 aa). A Fibronectin type-III domain is found at 57 to 152; the sequence is APQDLTAIPV…YIEASGTPPI (96 aa). N-linked (GlcNAc...) asparagine glycans are attached at residues Asn-109, Asn-121, Asn-191, Asn-203, Asn-239, Asn-272, Asn-315, Asn-390, Asn-398, Asn-419, Asn-422, and Asn-460. Residues 150–242 enclose the Ig-like C2-type 1 domain; the sequence is PPIPPTLRRN…GQPIHVNFTL (93 aa). Cysteines 176 and 226 form a disulfide. 2 Ig-like C2-type domains span residues 282-374 and 383-517; these read PRFT…YDVK and PIMS…AYLD. A disulfide bridge links Cys-306 with Cys-358. Cys-403 and Cys-501 are oxidised to a cystine. A helical transmembrane segment spans residues 548-568; sequence LIIFSVVGFVVVLILVTCIAI. The Cytoplasmic segment spans residues 569-972; that stretch reads LCKQTQVRHR…QTRDCCPYAN (404 aa). Residues 639 to 925 form the Protein kinase domain; the sequence is LTVGKTIGEG…ISVSSNQDYL (287 aa). ATP contacts are provided by residues 645 to 653 and Lys-673; that span reads IGEGAFGKV. Asp-781 acts as the Proton acceptor in catalysis. A Phosphotyrosine; by autocatalysis modification is found at Tyr-812.

The protein belongs to the protein kinase superfamily. Tyr protein kinase family. Fibroblast growth factor receptor subfamily.

The protein resides in the membrane. It catalyses the reaction L-tyrosyl-[protein] + ATP = O-phospho-L-tyrosyl-[protein] + ADP + H(+). Functionally, receptor for basic fibroblast growth factor. The chain is Fibroblast growth factor receptor (FGFR) from Strongylocentrotus purpuratus (Purple sea urchin).